The sequence spans 325 residues: NADH-ubiquinone oxidoreductase chain 1 (325 aa).

8 helical membrane-spanning segments follow: residues 5 to 25, 79 to 99, 105 to 125, 144 to 164, 177 to 197, 237 to 257, 263 to 283, and 302 to 322; these read VPAE…FLVL, VATF…YGMV, IGLL…IIAG, MVPY…CVGS, IWSG…RLAE, ILMS…ILDL, IPGS…YIWV, and VFLP…VTFQ.

This sequence belongs to the complex I subunit 1 family.

The protein localises to the mitochondrion inner membrane. It carries out the reaction a ubiquinone + NADH + 5 H(+)(in) = a ubiquinol + NAD(+) + 4 H(+)(out). Functionally, core subunit of the mitochondrial membrane respiratory chain NADH dehydrogenase (Complex I) that is believed to belong to the minimal assembly required for catalysis. Complex I functions in the transfer of electrons from NADH to the respiratory chain. The immediate electron acceptor for the enzyme is believed to be ubiquinone. In Petunia hybrida (Petunia), this protein is NADH-ubiquinone oxidoreductase chain 1 (ND1).